An 88-amino-acid polypeptide reads, in one-letter code: UPF0473 protein CLL_A1177 (88 aa).

This sequence belongs to the UPF0473 family.

In Clostridium botulinum (strain Eklund 17B / Type B), this protein is UPF0473 protein CLL_A1177.